A 456-amino-acid chain; its full sequence is tRNA modification GTPase MnmE (456 aa).

Positions 21, 85, and 124 each coordinate (6S)-5-formyl-5,6,7,8-tetrahydrofolate. The 160-residue stretch at 220–379 (QFRIVLYGEP…LLDAIKERTG (160 aa)) folds into the TrmE-type G domain. Asparagine 230 is a K(+) binding site. GTP is bound by residues 230–235 (NTGKSS), 249–255 (SEIPGTT), and 274–277 (DTAG). Serine 234 is a binding site for Mg(2+). 3 residues coordinate K(+): serine 249, isoleucine 251, and threonine 254. Residue threonine 255 coordinates Mg(2+). Residue lysine 456 coordinates (6S)-5-formyl-5,6,7,8-tetrahydrofolate.

The protein belongs to the TRAFAC class TrmE-Era-EngA-EngB-Septin-like GTPase superfamily. TrmE GTPase family. As to quaternary structure, homodimer. Heterotetramer of two MnmE and two MnmG subunits. K(+) is required as a cofactor.

Its subcellular location is the cytoplasm. Exhibits a very high intrinsic GTPase hydrolysis rate. Involved in the addition of a carboxymethylaminomethyl (cmnm) group at the wobble position (U34) of certain tRNAs, forming tRNA-cmnm(5)s(2)U34. In Leptospira interrogans serogroup Icterohaemorrhagiae serovar copenhageni (strain Fiocruz L1-130), this protein is tRNA modification GTPase MnmE.